The following is a 3744-amino-acid chain: SAGA complex/NuA4 acetyltransferase complex subunit TRA1 (3744 aa).

N-acetylserine is present on Ser2. 4 HEAT repeats span residues Ser2 to Ser40, Phe46 to Phe92, Pro94 to Ser131, and Asp135 to Ser172. The interval Ser2–Ser2598 is HEAT. A Phosphoserine modification is found at Ser172. Basic and acidic residues predominate over residues Phe185 to Pro195. Residues Phe185–Asn212 are disordered. Polar residues predominate over residues Ser196–Asn212. 3 HEAT repeats span residues Pro247–Glu284, Gln319–Thr357, and Lys437–Thr477. A compositionally biased stretch (basic and acidic residues) spans Leu522 to Ile539. A disordered region spans residues Leu522–Glu546. The residue at position 542 (Ser542) is a Phosphoserine. HEAT repeat units lie at residues Arg588 to Tyr628, Pro734 to Met771, Ile779 to Gly821, Arg829 to Val867, Ser870 to Ala910, Pro919 to Gln958, Asn1074 to Leu1112, Ser1188 to Ser1225, Lys1283 to Ile1320, Thr1369 to Leu1408, Asn1435 to Lys1472, Glu1476 to Ala1512, Leu1693 to Glu1734, Asp1739 to Lys1776, Phe1918 to Glu1955, Glu2115 to Glu2155, Glu2182 to Ala2219, Ser2230 to Phe2267, Asp2269 to Thr2307, and Ile2536 to Lys2573. Residues Arg2599–Phe3744 are head. Residues Leu2622–Asp3177 form the FAT domain. The PI3K/PI4K catalytic domain maps to Phe3374–Asn3732. Residues Phe3380–Ser3386 are G-loop. The catalytic loop stretch occupies residues Met3563–Lys3571. Residues Leu3600–Thr3625 are activation loop. In terms of domain architecture, FATC spans Thr3712–Phe3744.

The protein belongs to the PI3/PI4-kinase family. TRA1 subfamily. In terms of assembly, component of the 1.8 MDa SAGA (Spt-Ada-Gcn5 acetyltransferase) complex, which is composed of 19 subunits TRA1, SPT7, TAF5, NGG1/ADA3, SGF73, SPT20/ADA5, SPT8, TAF12, TAF6, HFI1/ADA1, UBP8, GCN5, ADA2, SPT3, SGF29, TAF10, TAF9, SGF11 and SUS1. The SAGA complex is composed of 4 modules, namely the HAT (histone acetyltransferase) module (GCN5, ADA2, NGG1/ADA3 and SGF29), the DUB (deubiquitinating) module (UBP8, SGF11, SGF73 and SUS1), the core or TAF (TBP-associated factor) module (TAF5, TAF6, TAF9, TAF10 and TAF12), and the Tra1 or SPT (Suppressor of Ty) module (TRA1, HFI1/ADA1, SPT3, SPT7, SPT8 and SPT20/ADA5). The Tra1/SPT module binds activators, the core module recruits TBP (TATA-binding protein), the HAT module contains the histone H3 acetyltransferase GCN5, and the DUB module comprises the histone H2B deubiquitinase UBP8. Also identified in an altered form of SAGA, named SALSA (SAGA altered, Spt8 absent) or SLIK (SAGA-like) complex, which contains a C-terminal truncated form of SPT7 and is missing SPT8. However, it has been shown that the SAGA and SAGA-like SALSA/SLIK transcriptional coactivators are structurally and biochemically equivalent. Component of the NuA4 acetyltransferase complex, which consists of the catalytic subunit ESA1 and the 12 non-catalytic subunits ACT1, ARP4, EAF1/VID21, SWC4/EAF2, EAF3, EAF5, EAF6, EAF7, EPL1, TRA1, YAF9 and YNG2. TRA1 is the scaffold subunit for binding to a variety of transcription activators or transcription factors to recruit NuA4 for targeted gene activation. Identified in the Ada.spt complex with NGG1/ADA3 and SPT7.

It localises to the nucleus. Essential scaffold subunit of the transcription coactivator SAGA complex. SAGA acts as a general cofactor required for essentially all RNA polymerase II transcription. At the promoters, SAGA is required for transcription pre-initiation complex (PIC) recruitment. It influences RNA polymerase II transcriptional activity through different activities such as TBP interaction (via core/TAF module) and promoter selectivity, interaction with transcription activators (via Tra1/SPT module), and chromatin modification through histone acetylation (via HAT module) and deubiquitination (via DUB module). SAGA preferentially acetylates histones H3 (to form H3K9ac, H3K14ac, H3K18ac and H3K23ac) and H2B and deubiquitinates histone H2B. SAGA interacts with DNA via upstream activating sequences (UASs). Also identified in a modified version of SAGA named SALSA or SLIK. The cleavage of SPT7 and the absence of the SPT8 subunit in SLIK neither drive any major conformational differences in its structure compared with SAGA, nor significantly affect HAT, DUB, or DNA-binding activities. Component of the NuA4 histone H4/H2A acetyltransferase involved in transcription and DNA repair. The sequence is that of SAGA complex/NuA4 acetyltransferase complex subunit TRA1 from Saccharomyces cerevisiae (strain ATCC 204508 / S288c) (Baker's yeast).